Consider the following 249-residue polypeptide: Ribonuclease HII (249 aa).

The region spanning Gly30–Pro221 is the RNase H type-2 domain. Asp36, Glu37, and Asp130 together coordinate a divalent metal cation.

This sequence belongs to the RNase HII family. Requires Mn(2+) as cofactor. It depends on Mg(2+) as a cofactor.

It is found in the cytoplasm. It carries out the reaction Endonucleolytic cleavage to 5'-phosphomonoester.. Endonuclease that specifically degrades the RNA of RNA-DNA hybrids. In Mycolicibacterium vanbaalenii (strain DSM 7251 / JCM 13017 / BCRC 16820 / KCTC 9966 / NRRL B-24157 / PYR-1) (Mycobacterium vanbaalenii), this protein is Ribonuclease HII.